A 453-amino-acid polypeptide reads, in one-letter code: Homogentisate 1,2-dioxygenase (453 aa).

The active-site Proton acceptor is His306. Residues His349 and Glu355 each contribute to the Fe cation site. Residues Tyr364 and His385 each contribute to the homogentisate site. A Fe cation-binding site is contributed by His385.

This sequence belongs to the homogentisate dioxygenase family. As to quaternary structure, hexamer; dimer of trimers. Fe cation serves as cofactor.

The enzyme catalyses homogentisate + O2 = 4-maleylacetoacetate + H(+). The protein operates within amino-acid degradation; L-phenylalanine degradation; acetoacetate and fumarate from L-phenylalanine: step 4/6. Its function is as follows. Involved in the catabolism of homogentisate (2,5-dihydroxyphenylacetate or 2,5-OH-PhAc), a central intermediate in the degradation of phenylalanine and tyrosine. Catalyzes the oxidative ring cleavage of the aromatic ring of homogentisate to yield maleylacetoacetate. The protein is Homogentisate 1,2-dioxygenase of Rhizobium johnstonii (strain DSM 114642 / LMG 32736 / 3841) (Rhizobium leguminosarum bv. viciae).